A 195-amino-acid polypeptide reads, in one-letter code: Meiotically up-regulated gene 84 protein (195 aa).

Over 1–84 the chain is Cytoplasmic; that stretch reads MTLTHHSTFI…IMVKVPTYEY (84 aa). The chain crosses the membrane as a helical span at residues 85–105; sequence YGFVMYLVSMLGFGVYIVWAL. Residues 106 to 122 lie on the Lumenal side of the membrane; sequence TPAPVLKFFEIHYYLSR. Residues 123 to 143 traverse the membrane as a helical segment; sequence WWALAIPTWLFVLVIYIHVVL. Topologically, residues 144–195 are cytoplasmic; that stretch reads NAYNTEVLTKPFSSLECIVDQYALVGEEDGAAHGRVVDLRLCDVNKQQLEET.

Its subcellular location is the endoplasmic reticulum membrane. Functionally, has a role in meiosis. The sequence is that of Meiotically up-regulated gene 84 protein (mug84) from Schizosaccharomyces pombe (strain 972 / ATCC 24843) (Fission yeast).